A 505-amino-acid chain; its full sequence is MSQQDKKLTGVFGHPVSDRENSMTAGPRGPLLMQDIYFLEQMSQFDREVIPERRMHAKGSGAFGTFTVTKDITKYTNAKIFSEIGKQTEMFARFSTVAGERGAADAERDIRGFALKFYTEEGNWDLVGNNTPVFFFRDPKLFVSLNRAVKRDPRTNMRDAQNNWDFWTGLPEALHQVTILMSDRGIPKDLRHMHGFGSHTYSMYNDSGERVWVKFHFRTQQGIENLTDEEAAEIIATDRDSSQRDLFEAIEKGDYPKWTMYIQVMTEEQAKNHKDNPFDLTKVWYHDEYPLIEVGEFELNRNPDNYFTDVEQAAFAPTNIIPGLDFSPDKMLQGRLFSYGDAQRYRLGVNHWQIPVNQPKGVGIENICPFSRDGQMRVVDNNQGGGTHHYPNNHGKFDSQPEYKKPPFPTDGYGYEYNQRQDDDNYFEQPGKLFRLQSEDAKERIFTNTANAMEGVTDDVKRRHIRHCYKADPEYGKGVAKALGIDINSIDLETENDETYENFEK.

A disordered region spans residues 1–25; it reads MSQQDKKLTGVFGHPVSDRENSMTA. Active-site residues include histidine 56 and asparagine 129. Tyrosine 339 lines the heme pocket.

The protein belongs to the catalase family. Homodimer. Heme serves as cofactor.

The enzyme catalyses 2 H2O2 = O2 + 2 H2O. Decomposes hydrogen peroxide into water and oxygen; serves to protect cells from the toxic effects of hydrogen peroxide. The chain is Catalase (katA) from Staphylococcus aureus.